Reading from the N-terminus, the 529-residue chain is L-ornithine N(5)-monooxygenase (529 aa).

FAD is bound by residues 100–108 (EKQPQFAWH) and Gln119. Substrate is bound at residue Lys124. Val185 is an FAD binding site. Residue 270 to 273 (NGQS) coordinates NADP(+). Substrate-binding positions include 309–312 (NEIF) and Asn339. 339–341 (NYG) is a binding site for NADP(+). Position 493-495 (493-495 (TLL)) interacts with FAD. Ser496 is a binding site for substrate.

Belongs to the lysine N(6)-hydroxylase/L-ornithine N(5)-oxygenase family. In terms of assembly, homotetramer. FAD serves as cofactor.

The catalysed reaction is L-ornithine + NADPH + O2 = N(5)-hydroxy-L-ornithine + NADP(+) + H2O. The enzyme catalyses L-ornithine + NADH + O2 = N(5)-hydroxy-L-ornithine + NAD(+) + H2O. It functions in the pathway siderophore biosynthesis. Its function is as follows. L-ornithine N(5)-monooxygenase; part of the gene cluster that mediates the biosynthesis of hydroxamate-containing siderophores that play a critical role in virulence. Cochliobolus heterostrophus produces extracellular coprogen-type siderophores including coprogen, neocoprogen I and neocoprogen II, as well as the intracellular siderophore ferricrocin. The role of extracellular siderophores is to supply iron to their producers in planta and the intracellular ferricrocin is required for intracellular iron distribution and storage with a crucial role in ascus and ascospore development. SIDA2 catalyzes the conversion of L-ornithine to N(5)-hydroxyornithine, the first step in the biosynthesis of all hydroxamate-containing siderophores. The assembly of extracellular coprogen-type siderophores is then performed by the nonribosomal peptide synthetase (NRPS) NPS6 whereas the intracellular siderophore ferricrocin is assembled by NPS2. In Cochliobolus heterostrophus (strain C4 / ATCC 48331 / race T) (Southern corn leaf blight fungus), this protein is L-ornithine N(5)-monooxygenase.